A 217-amino-acid chain; its full sequence is MKIILLGPPGAGKGTQAKFISEEYSIPHISTGDIFRKNISDKTPLGIEAKEYLDKGQLVPDEVTINIVKDRLSEDDCESGFLLDGFPRTVYQAEALDSFLNANDNKIDMVLLIDVPRELIFDRMTGRRICPSCGASYHVKFNPPKLKDKCDICNNDIIQRKDDTESTVKDRLDVYEKQTEPLINYYKKQGVISTIEGSGEINQVFQRAKSALGAVCK.

An ATP-binding site is contributed by 10-15 (GAGKGT). The tract at residues 30–59 (STGDIFRKNISDKTPLGIEAKEYLDKGQLV) is NMP. AMP-binding positions include Thr31, Arg36, 57–59 (QLV), 85–88 (GFPR), and Gln92. The tract at residues 126 to 163 (GRRICPSCGASYHVKFNPPKLKDKCDICNNDIIQRKDD) is LID. Residue Arg127 participates in ATP binding. 2 residues coordinate Zn(2+): Cys130 and Cys133. 136–137 (SY) contributes to the ATP binding site. The Zn(2+) site is built by Cys150 and Cys153. Residues Arg160 and Arg171 each coordinate AMP. Gly199 is a binding site for ATP.

Belongs to the adenylate kinase family. Monomer.

It is found in the cytoplasm. The enzyme catalyses AMP + ATP = 2 ADP. Its pathway is purine metabolism; AMP biosynthesis via salvage pathway; AMP from ADP: step 1/1. Functionally, catalyzes the reversible transfer of the terminal phosphate group between ATP and AMP. Plays an important role in cellular energy homeostasis and in adenine nucleotide metabolism. This chain is Adenylate kinase, found in Clostridium kluyveri (strain NBRC 12016).